The chain runs to 69 residues: UPF0346 protein llmg_2280 (69 aa).

This sequence belongs to the UPF0346 family.

This is UPF0346 protein llmg_2280 from Lactococcus lactis subsp. cremoris (strain MG1363).